Here is a 272-residue protein sequence, read N- to C-terminus: 2-dehydro-3-deoxyphosphooctonate aldolase (272 aa).

Belongs to the KdsA family.

The protein localises to the cytoplasm. It carries out the reaction D-arabinose 5-phosphate + phosphoenolpyruvate + H2O = 3-deoxy-alpha-D-manno-2-octulosonate-8-phosphate + phosphate. It participates in carbohydrate biosynthesis; 3-deoxy-D-manno-octulosonate biosynthesis; 3-deoxy-D-manno-octulosonate from D-ribulose 5-phosphate: step 2/3. Its pathway is bacterial outer membrane biogenesis; lipopolysaccharide biosynthesis. The polypeptide is 2-dehydro-3-deoxyphosphooctonate aldolase (Trichlorobacter lovleyi (strain ATCC BAA-1151 / DSM 17278 / SZ) (Geobacter lovleyi)).